The following is a 589-amino-acid chain: V-type ATP synthase alpha chain 1 (589 aa).

239 to 246 (GPFGAGKT) lines the ATP pocket.

It belongs to the ATPase alpha/beta chains family.

The enzyme catalyses ATP + H2O + 4 H(+)(in) = ADP + phosphate + 5 H(+)(out). Its function is as follows. Produces ATP from ADP in the presence of a proton gradient across the membrane. The V-type alpha chain is a catalytic subunit. This Treponema pallidum (strain Nichols) protein is V-type ATP synthase alpha chain 1 (atpA1).